The chain runs to 151 residues: D-aminoacyl-tRNA deacylase (151 aa).

The short motif at 137–138 is the Gly-cisPro motif, important for rejection of L-amino acids element; that stretch reads GP.

It belongs to the DTD family. Homodimer.

It localises to the cytoplasm. It carries out the reaction glycyl-tRNA(Ala) + H2O = tRNA(Ala) + glycine + H(+). The enzyme catalyses a D-aminoacyl-tRNA + H2O = a tRNA + a D-alpha-amino acid + H(+). Its function is as follows. An aminoacyl-tRNA editing enzyme that deacylates mischarged D-aminoacyl-tRNAs. Also deacylates mischarged glycyl-tRNA(Ala), protecting cells against glycine mischarging by AlaRS. Acts via tRNA-based rather than protein-based catalysis; rejects L-amino acids rather than detecting D-amino acids in the active site. By recycling D-aminoacyl-tRNA to D-amino acids and free tRNA molecules, this enzyme counteracts the toxicity associated with the formation of D-aminoacyl-tRNA entities in vivo and helps enforce protein L-homochirality. The chain is D-aminoacyl-tRNA deacylase from Protochlamydia amoebophila (strain UWE25).